Here is a 168-residue protein sequence, read N- to C-terminus: Small ribosomal subunit protein bS6 (168 aa).

Residues 103–168 (RQAIAEEKEK…AAADKSDDNA (66 aa)) form a disordered region. Over residues 106 to 115 (IAEEKEKKAE) the composition is skewed to basic and acidic residues. The segment covering 116–125 (GQAAADAAPA) has biased composition (low complexity).

Belongs to the bacterial ribosomal protein bS6 family.

Binds together with bS18 to 16S ribosomal RNA. This chain is Small ribosomal subunit protein bS6, found in Desulfosudis oleivorans (strain DSM 6200 / JCM 39069 / Hxd3) (Desulfococcus oleovorans).